Here is a 997-residue protein sequence, read N- to C-terminus: Protein HIR2 (997 aa).

WD repeat units lie at residues 10-48 (GISG…DTAF), 117-152 (VSQS…TRSA), 153-194 (NKKE…VVYH), 274-319 (VHSP…PLFA), and 323-362 (ISDS…LGKT). The disordered stretch occupies residues 408-584 (ADNSSNILST…RKPKEDALGN (177 aa)). Polar residues predominate over residues 409 to 446 (DNSSNILSTDTNTNEKNLSTVNTTEPQTNSQSSSYNNK). The segment covering 464–480 (SDEKAKNLEARPIEAKS) has biased composition (basic and acidic residues). Residues 491-501 (SKSSSVTTSDN) show a composition bias toward polar residues. Over residues 518–538 (TEKKTKPDKKSIKSENGESKV) the composition is skewed to basic and acidic residues. A compositionally biased stretch (polar residues) spans 539–567 (NKAQNTISPKESNTTDNKSTTPDFKNPSY). 2 WD repeats span residues 665–706 (LFQD…IIPP) and 708–745 (TIGV…LEFP).

It belongs to the WD repeat HIR1 family.

It is found in the nucleus. Its function is as follows. Required for replication-independent chromatin assembly and for the periodic repression of histone gene transcription during the cell cycle. The polypeptide is Protein HIR2 (HIR2) (Candida glabrata (strain ATCC 2001 / BCRC 20586 / JCM 3761 / NBRC 0622 / NRRL Y-65 / CBS 138) (Yeast)).